The following is a 488-amino-acid chain: Glutamyl-tRNA(Gln) amidotransferase subunit A (488 aa).

Residues Lys-77 and Ser-152 each act as charge relay system in the active site. Ser-176 serves as the catalytic Acyl-ester intermediate.

The protein belongs to the amidase family. GatA subfamily. In terms of assembly, heterotrimer of A, B and C subunits.

It carries out the reaction L-glutamyl-tRNA(Gln) + L-glutamine + ATP + H2O = L-glutaminyl-tRNA(Gln) + L-glutamate + ADP + phosphate + H(+). Its function is as follows. Allows the formation of correctly charged Gln-tRNA(Gln) through the transamidation of misacylated Glu-tRNA(Gln) in organisms which lack glutaminyl-tRNA synthetase. The reaction takes place in the presence of glutamine and ATP through an activated gamma-phospho-Glu-tRNA(Gln). This Streptococcus agalactiae serotype III (strain NEM316) protein is Glutamyl-tRNA(Gln) amidotransferase subunit A.